The chain runs to 118 residues: Large ribosomal subunit protein uL24 (118 aa).

Belongs to the universal ribosomal protein uL24 family. In terms of assembly, part of the 50S ribosomal subunit.

Its function is as follows. One of two assembly initiator proteins, it binds directly to the 5'-end of the 23S rRNA, where it nucleates assembly of the 50S subunit. Functionally, one of the proteins that surrounds the polypeptide exit tunnel on the outside of the subunit. The polypeptide is Large ribosomal subunit protein uL24 (Prochlorococcus marinus (strain MIT 9313)).